A 35-amino-acid polypeptide reads, in one-letter code: Hemocyanin A chain (35 aa).

This sequence belongs to the tyrosinase family. Hemocyanin subfamily. In terms of tissue distribution, hemolymph.

The protein localises to the secreted. Its subcellular location is the extracellular space. Hemocyanins are copper-containing oxygen carriers occurring freely dissolved in the hemolymph of many mollusks and arthropods. The protein is Hemocyanin A chain of Cherax destructor (Common yabby crayfish).